We begin with the raw amino-acid sequence, 728 residues long: LPS-assembly protein LptD (728 aa).

Positions 1–21 (MSALPGFTLAALLLNVSLAEA) are cleaved as a signal peptide.

It belongs to the LptD family. Component of the lipopolysaccharide transport and assembly complex. Interacts with LptE and LptA.

Its subcellular location is the cell outer membrane. Functionally, together with LptE, is involved in the assembly of lipopolysaccharide (LPS) at the surface of the outer membrane. The polypeptide is LPS-assembly protein LptD (Thiobacillus denitrificans (strain ATCC 25259 / T1)).